The chain runs to 367 residues: CST complex subunit STN1 (367 aa).

Positions 56–154 form a DNA-binding region, OB; it reads VEILGTVIGR…EIRVTTYYKV (99 aa). Winged helix-turn-helix (wHTH) stretches follow at residues 190–294 and 295–367; these read RAFS…YVTR and EDKE…YTAF.

It belongs to the STN1 family. As to quaternary structure, component of the CST complex, composed of TEN1, CTC1 and STN1. Interacts with TEN1 and CTC1; the interaction is direct. Interacts with ACD/TPP1.

It localises to the nucleus. The protein localises to the chromosome. Its subcellular location is the telomere. Functionally, component of the CST complex, a complex that binds to single-stranded DNA and is required to protect telomeres from DNA degradation. The CST complex binds single-stranded DNA with high affinity in a sequence-independent manner, while isolated subunits bind DNA with low affinity by themselves. In addition to telomere protection, the CST complex has probably a more general role in DNA metabolism at non-telomeric sites. This Ailuropoda melanoleuca (Giant panda) protein is CST complex subunit STN1.